Here is a 310-residue protein sequence, read N- to C-terminus: Vomeronasal type-1 receptor 44 (310 aa).

At 1–20 (MNKANLLHIDTNIKITLLAE) the chain is on the extracellular side. A helical membrane pass occupies residues 21-41 (VSVGISANSILFIAYLCMLLG). Topologically, residues 42–50 (ENRHKPIDL) are cytoplasmic. A helical membrane pass occupies residues 51–71 (YIAFLSLTQLMLLITMGLIAV). The Extracellular segment spans residues 72–93 (DMFMPWGRWDSTTCQSLIYLHR). An intrachain disulfide couples C85 to C172. Residues 94 to 114 (FLRGLTLCATCLLNVLWTITL) form a helical membrane-spanning segment. Residues 115–131 (SSRNSCLAKFKHKYPHH) are Cytoplasmic-facing. A helical membrane pass occupies residues 132-152 (ISGAFLFLCVLYMSFSSHFLV). At 153 to 190 (SMTVTPNLTSENFMYVTQSCSLLPMSYSRTSMFSTPVA) the chain is on the extracellular side. N159 carries N-linked (GlcNAc...) asparagine glycosylation. The chain crosses the membrane as a helical span at residues 191 to 211 (IRETFLISLMALSSGYMVALL). The Cytoplasmic segment spans residues 212–238 (WRHKKQAQHLRSTSLSSKASPEQRATR). A helical membrane pass occupies residues 239–259 (TILLLMSFFVVFYILDTVIFH). The Extracellular portion of the chain corresponds to 260–268 (SRMKFKDGS). Residues 269-289 (ILYCFQIIVSHSYVTVSPFVF) traverse the membrane as a helical segment. At 290–310 (ICTEKHIIKFLRSMCGRIANI) the chain is on the cytoplasmic side.

It belongs to the G-protein coupled receptor 1 family.

The protein resides in the cell membrane. Its function is as follows. Putative pheromone receptor implicated in the regulation of social and reproductive behavior. The polypeptide is Vomeronasal type-1 receptor 44 (Vmn1r44) (Mus musculus (Mouse)).